Reading from the N-terminus, the 484-residue chain is Mitochondrial metal transporter 2 (484 aa).

The transit peptide at 1–56 (MLRISIDSIKQFGSFVPGYNNTSYHAAGRAIRTSSLYSTMISANPRRCLHSSKLLN) directs the protein to the mitochondrion. Residues 73–82 (SSQNGSNSRQ) show a composition bias toward polar residues. Residues 73-114 (SSQNGSNSRQNESEGKKEGKASSVKSLLQHTHSHSHTHMHDN) form a disordered region. The span at 83-92 (NESEGKKEGK) shows a compositional bias: basic and acidic residues. The next 5 helical transmembrane spans lie at 132–152 (ITWIGLASNVGMAVGKFVGGI), 158–178 (ALLADSVHALSDLVSDFLTLF), 209–229 (ILAMAGISIGWSSLCAIVGPV), 256–276 (ATNVNAVWIAAGSILVKEWVF), and 316–336 (YFFNIQSLDNLGGLVVSGLII). A disordered region spans residues 453 to 484 (DSKGDLEHSHDTKSTNHTHTHSDSADTHTHKH).

This sequence belongs to the cation diffusion facilitator (CDF) transporter (TC 2.A.4) family. SLC30A subfamily.

It localises to the mitochondrion membrane. Mitochondrial metal transporter involved in mitochondrial iron accumulation. This chain is Mitochondrial metal transporter 2 (MMT2), found in Saccharomyces cerevisiae (strain ATCC 204508 / S288c) (Baker's yeast).